The following is a 142-amino-acid chain: Neuritin (142 aa).

Residues 1 to 27 form the signal peptide; sequence MGLKLNGRYISLILAVQIAYLVQAVRA. A lipid anchor (GPI-anchor amidated glycine) is attached at Gly116. The propeptide at 117–142 is removed in mature form; sequence AAGSLLPAFPVLLVSLSAALATWLSF.

It belongs to the neuritin family. In terms of assembly, component of the outer core of AMPAR complex. AMPAR complex consists of an inner core made of 4 pore-forming GluA/GRIA proteins (GRIA1, GRIA2, GRIA3 and GRIA4) and 4 major auxiliary subunits arranged in a twofold symmetry. One of the two pairs of distinct binding sites is occupied either by CNIH2, CNIH3 or CACNG2, CACNG3. The other harbors CACNG2, CACNG3, CACNG4, CACNG8 or GSG1L. This inner core of AMPAR complex is complemented by outer core constituents binding directly to the GluA/GRIA proteins at sites distinct from the interaction sites of the inner core constituents. Outer core constituents include at least PRRT1, PRRT2, CKAMP44/SHISA9, FRRS1L and NRN1. The proteins of the inner and outer core serve as a platform for other, more peripherally associated AMPAR constituents. Alone or in combination, these auxiliary subunits control the gating and pharmacology of the AMPAR complex and profoundly impact their biogenesis and protein processing.

Its subcellular location is the cell membrane. The protein resides in the synapse. Promotes neurite outgrowth and especially branching of neuritic processes in primary hippocampal and cortical cells. This chain is Neuritin (NRN1), found in Homo sapiens (Human).